An 887-amino-acid chain; its full sequence is Phosphatidylinositol 3-kinase catalytic subunit type 3 (887 aa).

The C2 PI3K-type domain maps to 35–184 (YKAVLEDPML…LAKLTKAHRQ (150 aa)). Residues 149–170 (VEADGSEPTRTPGRTSSTLSED) are disordered. The span at 156-170 (PTRTPGRTSSTLSED) shows a compositional bias: polar residues. The residue at position 163 (threonine 163) is a Phosphothreonine; by AMPK. At serine 165 the chain carries Phosphoserine; by AMPK. Serine 244, serine 261, and serine 282 each carry phosphoserine. Positions 283-520 (DHDLKPNATT…PKTHEMYLNV (238 aa)) constitute a PIK helical domain. A disordered region spans residues 415–466 (LEPTKKDSQTSASESLSNSGVSSGDIDSSQIITNPLPPVASPPPASKAKEVS). The span at 425-437 (SASESLSNSGVSS) shows a compositional bias: low complexity. The segment covering 449-459 (PLPPVASPPPA) has biased composition (pro residues). In terms of domain architecture, PI3K/PI4K catalytic spans 605–871 (IPETATLFKS…LIDESVHALF (267 aa)). A G-loop region spans residues 611 to 617 (LFKSALM). The interval 740-748 (GVGDRHLDN) is catalytic loop. An activation loop region spans residues 759–780 (HIDFGYILGRDPKPLPPPMKLN).

This sequence belongs to the PI3/PI4-kinase family. In terms of assembly, component of the PI3K (PI3KC3/PI3K-III/class III phosphatidylinositol 3-kinase) complex the core of which is composed of the catalytic subunit PIK3C3, the regulatory subunit PIK3R4 and BECN1 associating with additional regulatory/auxiliary subunits to form alternative complex forms. Alternative complex forms containing a fourth regulatory subunit in a mutually exclusive manner are: the PI3K complex I (PI3KC3-C1) containing ATG14, and the PI3K complex II (PI3KC3-C2) containing UVRAG. PI3KC3-C1 displays a V-shaped architecture with PIK3R4 serving as a bridge between PIK3C3 and the ATG14:BECN1 subcomplex. Both, PI3KC3-C1 and PI3KC3-C2, can associate with further regulatory subunits such as RUBCN, SH3GLB1/Bif-1 and AMBRA1. PI3KC3-C1 probably associates with PIK3CB. Interacts with RAB7A in the presence of PIK3R4. Interacts with AMBRA1. Interacts with BECN1P1/BECN2. Interacts with SLAMF1. May be a component of a complex composed of RAB5A (in GDP-bound form), DYN2 and PIK3C3. Interacts with NCKAP1L. Interacts with ATG14; this interaction is increased in the absence of TMEM39A. Interacts with STEEP1; the interaction is STING1-dependent and required for trafficking of STING1 from the endoplasmic reticulum. Interacts with YWHAG. Interacts with ARMC3. It depends on Mn(2+) as a cofactor. Post-translationally, ubiquitinated via 'Lys-29'- and 'Lys-48'-linked ubiquitination by UBE3C, promoting its degradation. Deubiquitination by ZRANB1/TRABID promotes its stabilization, leading to autophagosome maturation.

Its subcellular location is the midbody. The protein resides in the late endosome. It localises to the cytoplasmic vesicle. It is found in the autophagosome. It carries out the reaction a 1,2-diacyl-sn-glycero-3-phospho-(1D-myo-inositol) + ATP = a 1,2-diacyl-sn-glycero-3-phospho-(1D-myo-inositol-3-phosphate) + ADP + H(+). Functionally, catalytic subunit of the PI3K complex that mediates formation of phosphatidylinositol 3-phosphate; different complex forms are believed to play a role in multiple membrane trafficking pathways: PI3KC3-C1 is involved in initiation of autophagosomes and PI3KC3-C2 in maturation of autophagosomes and endocytosis. As part of PI3KC3-C1, promotes endoplasmic reticulum membrane curvature formation prior to vesicle budding. Involved in regulation of degradative endocytic trafficking and required for the abscission step in cytokinesis, probably in the context of PI3KC3-C2. Involved in the transport of lysosomal enzyme precursors to lysosomes. Required for transport from early to late endosomes. In Mus musculus (Mouse), this protein is Phosphatidylinositol 3-kinase catalytic subunit type 3.